The following is a 469-amino-acid chain: 3-isopropylmalate dehydratase large subunit (469 aa).

Positions 347, 408, and 411 each coordinate [4Fe-4S] cluster.

Belongs to the aconitase/IPM isomerase family. LeuC type 1 subfamily. As to quaternary structure, heterodimer of LeuC and LeuD. It depends on [4Fe-4S] cluster as a cofactor.

It carries out the reaction (2R,3S)-3-isopropylmalate = (2S)-2-isopropylmalate. It functions in the pathway amino-acid biosynthesis; L-leucine biosynthesis; L-leucine from 3-methyl-2-oxobutanoate: step 2/4. Functionally, catalyzes the isomerization between 2-isopropylmalate and 3-isopropylmalate, via the formation of 2-isopropylmaleate. This is 3-isopropylmalate dehydratase large subunit from Actinobacillus pleuropneumoniae serotype 3 (strain JL03).